The primary structure comprises 595 residues: Inactive serine/threonine-protein kinase PLK5 (595 aa).

The 253-residue stretch at 27–279 (YRRGKLIGKG…LDHLLQDDFF (253 aa)) folds into the Protein kinase domain. Residues 33 to 41 (IGKGAFSRC) and lysine 56 each bind ATP. The active-site Proton acceptor is aspartate 150. The segment at 326-350 (FTSKEASGPGEEGTEPDHMEAGNEE) is disordered. The segment covering 340–350 (EPDHMEAGNEE) has biased composition (basic and acidic residues). 2 POLO box domains span residues 413–491 (WAPK…YMQR) and 509–595 (DISL…LQSV).

The protein belongs to the protein kinase superfamily. Ser/Thr protein kinase family. CDC5/Polo subfamily. Expressed in the cerebellum, eye and brain cortex (at protein level). Expressed in highly differentiated tissues, such as brain, eyes and ovary. Not detectable in proliferating tissues, such as the colon, spleen and placenta.

It localises to the nucleus. It is found in the nucleolus. The protein resides in the cytoplasm. Functionally, inactive serine/threonine-protein kinase that plays a role in cell cycle progression and neuronal differentiation. The polypeptide is Inactive serine/threonine-protein kinase PLK5 (Mus musculus (Mouse)).